Consider the following 155-residue polypeptide: Regulatory protein RecX (155 aa).

The protein belongs to the RecX family.

Its subcellular location is the cytoplasm. Functionally, modulates RecA activity. The chain is Regulatory protein RecX from Pseudomonas fluorescens (strain ATCC BAA-477 / NRRL B-23932 / Pf-5).